Here is a 302-residue protein sequence, read N- to C-terminus: Phospho-N-acetylmuramoyl-pentapeptide-transferase (302 aa).

Transmembrane regions (helical) follow at residues 1–21, 42–62, 67–87, 95–115, 123–143, 154–174, 178–198, 204–224, 229–249, and 279–299; these read MIAA…KLFR, GTPT…GMIS, MVLL…FLSV, LKTY…LLLI, FFGS…LVIV, GLDG…WFFL, GVSE…LVFN, IFMG…VSVL, FYLV…ILQV, and IVAV…EIFG.

The protein belongs to the glycosyltransferase 4 family. MraY subfamily. Mg(2+) serves as cofactor.

It is found in the cell inner membrane. It catalyses the reaction UDP-N-acetyl-alpha-D-muramoyl-L-alanyl-gamma-D-glutamyl-meso-2,6-diaminopimeloyl-D-alanyl-D-alanine + di-trans,octa-cis-undecaprenyl phosphate = di-trans,octa-cis-undecaprenyl diphospho-N-acetyl-alpha-D-muramoyl-L-alanyl-D-glutamyl-meso-2,6-diaminopimeloyl-D-alanyl-D-alanine + UMP. Its pathway is cell wall biogenesis; peptidoglycan biosynthesis. In terms of biological role, catalyzes the initial step of the lipid cycle reactions in the biosynthesis of the cell wall peptidoglycan: transfers peptidoglycan precursor phospho-MurNAc-pentapeptide from UDP-MurNAc-pentapeptide onto the lipid carrier undecaprenyl phosphate, yielding undecaprenyl-pyrophosphoryl-MurNAc-pentapeptide, known as lipid I. This is Phospho-N-acetylmuramoyl-pentapeptide-transferase from Thermotoga maritima (strain ATCC 43589 / DSM 3109 / JCM 10099 / NBRC 100826 / MSB8).